Consider the following 70-residue polypeptide: Large ribosomal subunit protein bL31 (70 aa).

Residues C16, C18, C37, and C40 each contribute to the Zn(2+) site.

It belongs to the bacterial ribosomal protein bL31 family. Type A subfamily. As to quaternary structure, part of the 50S ribosomal subunit. It depends on Zn(2+) as a cofactor.

Functionally, binds the 23S rRNA. The protein is Large ribosomal subunit protein bL31 of Histophilus somni (strain 2336) (Haemophilus somnus).